Consider the following 165-residue polypeptide: Large ribosomal subunit protein uL10 (165 aa).

This sequence belongs to the universal ribosomal protein uL10 family. Part of the ribosomal stalk of the 50S ribosomal subunit. The N-terminus interacts with L11 and the large rRNA to form the base of the stalk. The C-terminus forms an elongated spine to which L12 dimers bind in a sequential fashion forming a multimeric L10(L12)X complex.

Functionally, forms part of the ribosomal stalk, playing a central role in the interaction of the ribosome with GTP-bound translation factors. The sequence is that of Large ribosomal subunit protein uL10 (rplJ) from Halalkalibacterium halodurans (strain ATCC BAA-125 / DSM 18197 / FERM 7344 / JCM 9153 / C-125) (Bacillus halodurans).